Consider the following 381-residue polypeptide: Selenoprotein P (381 aa).

The N-terminal stretch at 1–19 (MWRSLGLALALCLLPLGGT) is a signal peptide. A glycan (N-linked (GlcNAc...) asparagine) is linked at Asn-46. Residue Sec-59 is a non-standard amino acid, selenocysteine. N-linked (GlcNAc...) asparagine glycans are attached at residues Asn-83, Asn-119, and Asn-128. The disordered stretch occupies residues 202–268 (SPHYHHEHHH…ENRDMPGSED (67 aa)). Positions 204–217 (HYHHEHHHNHRHQH) are enriched in basic residues. Residues 218–229 (LGSSELSENQQP) are compositionally biased toward polar residues. The span at 243-255 (LHHHHKHKGQHRQ) shows a compositional bias: basic residues. Ser-266 is modified (phosphoserine). 2 non-standard amino acids (selenocysteine) are found at residues Sec-318 and Sec-330. An N-linked (GlcNAc...) asparagine glycan is attached at Asn-338. Residues Sec-345, Sec-352, Sec-367, Sec-369, Sec-376, and Sec-378 are each a non-standard amino acid (selenocysteine). The tract at residues 352–381 (UQISQQLIPTEASTSURUKNQAKKUEUPSN) is disordered. Over residues 353-369 (QISQQLIPTEASTSURU) the composition is skewed to polar residues.

It belongs to the selenoprotein P family. Post-translationally, phosphorylation sites are present in the extracellular medium.

Its subcellular location is the secreted. In terms of biological role, might be responsible for some of the extracellular antioxidant defense properties of selenium or might be involved in the transport of selenium. May supply selenium to tissues such as brain and testis. The chain is Selenoprotein P from Pongo abelii (Sumatran orangutan).